We begin with the raw amino-acid sequence, 280 residues long: MGKKLLPGLIHRLPQNAMSRTMGKITATPFSRLAIQRYIKHYQIDTSIIEKPASEYRTLKEFFSRRLKPAARPIAPGPDTIVSPVDGTVSQLGDICEGTLIQAKGKDFSVSELLGGSEEEAKRYYGGKFITIYLSPRDYHRIHMPVTGDLSSYCYLPGRLYPVNKLGIENVDRLFARNERLVTHIKTDSLGDMALVKVGALFVGSVKVCYNTATTNIKHGRQTHEKIAGTPRYEKGSELGWFEFGSTVILLLESNELEWATGVEKGKSLLMGQALATKKA.

Active-site charge relay system; for autoendoproteolytic cleavage activity residues include aspartate 86, histidine 143, and serine 246. Serine 246 acts as the Schiff-base intermediate with substrate; via pyruvic acid; for decarboxylase activity in catalysis. Serine 246 bears the Pyruvic acid (Ser); by autocatalysis mark.

Belongs to the phosphatidylserine decarboxylase family. PSD-B subfamily. Prokaryotic type I sub-subfamily. Heterodimer of a large membrane-associated beta subunit and a small pyruvoyl-containing alpha subunit. Pyruvate is required as a cofactor. Is synthesized initially as an inactive proenzyme. Formation of the active enzyme involves a self-maturation process in which the active site pyruvoyl group is generated from an internal serine residue via an autocatalytic post-translational modification. Two non-identical subunits are generated from the proenzyme in this reaction, and the pyruvate is formed at the N-terminus of the alpha chain, which is derived from the carboxyl end of the proenzyme. The autoendoproteolytic cleavage occurs by a canonical serine protease mechanism, in which the side chain hydroxyl group of the serine supplies its oxygen atom to form the C-terminus of the beta chain, while the remainder of the serine residue undergoes an oxidative deamination to produce ammonia and the pyruvoyl prosthetic group on the alpha chain. During this reaction, the Ser that is part of the protease active site of the proenzyme becomes the pyruvoyl prosthetic group, which constitutes an essential element of the active site of the mature decarboxylase.

The protein resides in the cell membrane. It carries out the reaction a 1,2-diacyl-sn-glycero-3-phospho-L-serine + H(+) = a 1,2-diacyl-sn-glycero-3-phosphoethanolamine + CO2. Its pathway is phospholipid metabolism; phosphatidylethanolamine biosynthesis; phosphatidylethanolamine from CDP-diacylglycerol: step 2/2. In terms of biological role, catalyzes the formation of phosphatidylethanolamine (PtdEtn) from phosphatidylserine (PtdSer). This is Phosphatidylserine decarboxylase proenzyme from Brevibacillus brevis (strain 47 / JCM 6285 / NBRC 100599).